A 315-amino-acid polypeptide reads, in one-letter code: Ankyrin repeat domain-containing protein SOWAHD (315 aa).

The disordered stretch occupies residues 1–39; the sequence is MAQLGGAANRAPTASLAPTSQSLRCAPQPRPSRADTGSL. ANK repeat units lie at residues 112–141, 147–162, and 186–216; these read PREH…ELLL, TGYS…GRHE, and GGLT…DATR.

This sequence belongs to the SOWAH family.

This is Ankyrin repeat domain-containing protein SOWAHD (SOWAHD) from Homo sapiens (Human).